We begin with the raw amino-acid sequence, 192 residues long: Glycerol-3-phosphate acyltransferase (192 aa).

The next 5 helical transmembrane spans lie at 5 to 25 (VVLI…ITRI), 50 to 70 (FLAA…VYIA), 78 to 98 (DFYI…PIWL), 112 to 132 (ILIA…IIVF), and 153 to 173 (SFFF…LVFL).

This sequence belongs to the PlsY family. Probably interacts with PlsX.

Its subcellular location is the cell membrane. It catalyses the reaction an acyl phosphate + sn-glycerol 3-phosphate = a 1-acyl-sn-glycero-3-phosphate + phosphate. It participates in lipid metabolism; phospholipid metabolism. In terms of biological role, catalyzes the transfer of an acyl group from acyl-phosphate (acyl-PO(4)) to glycerol-3-phosphate (G3P) to form lysophosphatidic acid (LPA). This enzyme utilizes acyl-phosphate as fatty acyl donor, but not acyl-CoA or acyl-ACP. In Wolbachia pipientis wMel, this protein is Glycerol-3-phosphate acyltransferase.